A 377-amino-acid chain; its full sequence is Guanine nucleotide-binding protein subunit alpha-13 (377 aa).

S-palmitoyl cysteine attachment occurs at residues Cys-14 and Cys-18. In terms of domain architecture, G-alpha spans 47–377 (RLVKILLLGA…HDNLKQLMLQ (331 aa)). The G1 motif stretch occupies residues 50–63 (KILLLGAGESGKST). GTP contacts are provided by residues 58–63 (ESGKST), Ser-173, and 197–200 (LLAR). Residue Ser-62 participates in Mg(2+) binding. A G2 motif region spans residues 195 to 203 (DILLARRPT). A Mg(2+)-binding site is contributed by Thr-203. Thr-203 carries the post-translational modification Phosphothreonine; by PKA. Residues 218–227 (FKMVDVGGQR) form a G3 motif region. A G4 motif region spans residues 287 to 294 (ILFLNKTD). GTP is bound by residues 291–294 (NKTD) and Ala-349. The tract at residues 347 to 352 (TTAINT) is G5 motif.

This sequence belongs to the G-alpha family. G(12) subfamily. As to quaternary structure, g proteins are composed of 3 units; alpha, beta and gamma. The alpha chain contains the guanine nucleotide binding site. Interacts with UBXD5. Interacts with HAX1. Interacts (in GTP-bound form) with PPP5C (via TPR repeats); activates PPP5C phosphatase activity and translocates PPP5C to the cell membrane. Interacts with RGS22. Interacts with ARHGEF1. Interacts (in GTP-bound form) with ARHGEF11 (via RGS domain). Interacts (in GTP-bound form) with ARHGEF12 (via RGS domain). Interacts (in GTP-bound form) with CTNND1. Interacts with GAS2L2. Interacts with GPR35. Interacts with GPR174. Palmitoylation is critical for proper membrane localization and signaling. In terms of processing, phosphorylation on Thr-203 by PKA destabilizes the heterotrimer of alpha, beta and gamma, and inhibits Rho activation.

It localises to the membrane. It is found in the melanosome. Its subcellular location is the cytoplasm. The protein localises to the nucleus. In terms of biological role, guanine nucleotide-binding proteins (G proteins) are involved as modulators or transducers in various transmembrane signaling systems. Activates effector molecule RhoA by binding and activating RhoGEFs (ARHGEF1/p115RhoGEF, ARHGEF11/PDZ-RhoGEF and ARHGEF12/LARG). GNA13-dependent Rho signaling subsequently regulates transcription factor AP-1 (activating protein-1). Promotes tumor cell invasion and metastasis by activating RhoA/ROCK signaling pathway. Inhibits CDH1-mediated cell adhesion in process independent from Rho activation. In lymphoid follicles, transmits P2RY8- and S1PR2-dependent signals that lead to inhibition of germinal center (GC) B cell growth and migration outside the GC niche. The chain is Guanine nucleotide-binding protein subunit alpha-13 (Gna13) from Rattus norvegicus (Rat).